The chain runs to 60 residues: LKCKKLVPLFSKTCPPGKNLCYKMFMVAAPKVPVKRGCINVCPKSSLLVKYVCCNTDKCN.

4 cysteine pairs are disulfide-bonded: Cys-3-Cys-21, Cys-14-Cys-38, Cys-42-Cys-53, and Cys-54-Cys-59.

Belongs to the three-finger toxin family. Short-chain subfamily. Type IA cytotoxin sub-subfamily. In terms of assembly, monomer in solution; Homodimer and oligomer in the presence of negatively charged lipids forming a pore with a size ranging between 20 and 30 Angstroms. In terms of tissue distribution, expressed by the venom gland.

It localises to the secreted. Its subcellular location is the target cell membrane. Its function is as follows. Shows cytolytic activity on many different cells by forming pore in lipid membranes. In vivo, increases heart rate or kills the animal by cardiac arrest. In addition, it binds to heparin with high affinity, interacts with Kv channel-interacting protein 1 (KCNIP1) in a calcium-independent manner, and binds to integrin alpha-V/beta-3 (ITGAV/ITGB3) with moderate affinity. In Naja atra (Chinese cobra), this protein is Cytotoxin SP15d.